The following is a 351-amino-acid chain: Renin receptor (351 aa).

A signal peptide spans 1 to 17; it reads MAVLVVFLSFLVADVFG. At 18–303 the chain is on the extracellular side; that stretch reads NEFSILRSPG…YNLAYKYNFE (286 aa). A helical membrane pass occupies residues 304-324; the sequence is YPVVFNLVLWIMIGLALTLIV. Residues 325 to 351 lie on the Cytoplasmic side of the membrane; it reads TCYNIWNMDPGYDSIIYRMTNQKIRMD. The Mediates retrograde transport to the ER motif lies at 347–351; that stretch reads KIRMD.

Interacts with renin. Accessory component of the multisubunit proton-transporting vacuolar (V)-ATPase protein pump. Interacts (via N-terminus) with ATP6AP1 (via N-terminus). Interacts with ATP6V0D1; ATP6V0D1 is a V-ATPase complex subunit and the interaction promotes V-ATPase complex assembly. Interacts with TMEM9; TMEM9 is a V-ATPase assembly regulator and the interaction induces the interaction with ATP6V0D1. Interacts with VMA21 (via N-terminus); VMA21 is a V-ATPase accessory component. Phosphorylated. Post-translationally, proteolytically cleaved by a furin-like convertase in the trans-Golgi network to generate N- and C-terminal fragments. In terms of tissue distribution, expressed in the brain.

Its subcellular location is the endoplasmic reticulum membrane. It is found in the lysosome membrane. It localises to the cytoplasmic vesicle. The protein resides in the autophagosome membrane. The protein localises to the cell projection. Its subcellular location is the dendritic spine membrane. It is found in the axon. It localises to the endosome membrane. The protein resides in the clathrin-coated vesicle membrane. The protein localises to the secretory vesicle. Its subcellular location is the synaptic vesicle membrane. Multifunctional protein which functions as a renin, prorenin cellular receptor and is involved in the assembly of the lysosomal proton-transporting V-type ATPase (V-ATPase) and the acidification of the endo-lysosomal system. May mediate renin-dependent cellular responses by activating ERK1 and ERK2. By increasing the catalytic efficiency of renin in AGT/angiotensinogen conversion to angiotensin I, may also play a role in the renin-angiotensin system (RAS). Through its function in V-type ATPase (v-ATPase) assembly and acidification of the lysosome it regulates protein degradation and may control different signaling pathways important for proper brain development, synapse morphology and synaptic transmission. This Bos taurus (Bovine) protein is Renin receptor (ATP6AP2).